A 953-amino-acid chain; its full sequence is Glutamate receptor 3.5 (953 aa).

The N-terminal stretch at 1–29 is a signal peptide; that stretch reads MGFFVMIRDVSMGFMLLCISALWVLPIQG. At 30–606 the chain is on the extracellular side; it reads AGRESFSRNS…SPWSFLKPFT (577 aa). 8 N-linked (GlcNAc...) asparagine glycosylation sites follow: asparagine 38, asparagine 95, asparagine 223, asparagine 371, asparagine 397, asparagine 436, asparagine 454, and asparagine 569. The helical transmembrane segment at 607 to 627 threads the bilayer; sequence IEMWAVTGALFLFVGAVIWIL. At 628–636 the chain is on the cytoplasmic side; the sequence is EHRFNEEFR. A helical membrane pass occupies residues 637-657; it reads GPPRRQIITVFWFSFSTMFFS. At 658–668 the chain is on the cytoplasmic side; that stretch reads HRENTVSTLGR. The chain crosses the membrane as a helical span at residues 669-689; that stretch reads FVLLVWLFVVLIINSSYTASL. The Extracellular portion of the chain corresponds to 690-850; sequence TSILTVQQLT…TENYQISVQS (161 aa). A helical membrane pass occupies residues 851-871; sequence FWGLFLICGVVWFIALTLFCW. Over 872 to 953 the chain is Cytoplasmic; it reads KVFWQYQRLR…SQSKDHETPQ (82 aa). Residues 928-953 are disordered; sequence EKSSKKLKDGQSSAENSQSKDHETPQ.

The protein belongs to the glutamate-gated ion channel (TC 1.A.10.1) family. May form heteromers. As to expression, expressed predominantly in roots. Also detected in shoots.

Its subcellular location is the membrane. In terms of biological role, glutamate-gated receptor that probably acts as a non-selective cation channel. May be involved in light-signal transduction and calcium homeostasis via the regulation of calcium influx into cells. The polypeptide is Glutamate receptor 3.5 (GLR3.5) (Arabidopsis thaliana (Mouse-ear cress)).